The chain runs to 288 residues: Mycothiol S-conjugate amidase (288 aa).

His12, Asp15, and His142 together coordinate Zn(2+).

The protein belongs to the MshB deacetylase family. Mca subfamily. In terms of assembly, monomer. Zn(2+) serves as cofactor.

It carries out the reaction mycothiol S-conjugate + H2O = an N-acetyl-L-cysteine-S-conjugate + 1D-myo-inositol 2-amino-2-deoxy-alpha-D-glucopyranoside. With respect to regulation, partially inhibited by MSH when MSmB (a bimane derivative of MSH) is used as substrate. Its function is as follows. A mycothiol (MSH, N-acetyl-cysteinyl-glucosaminyl-inositol) S-conjugate amidase, it recycles conjugated MSH to the N-acetyl cysteine conjugate and the MSH precursor. Involved in MSH-dependent detoxification of a number of alkylating agents and antibiotics. Activity is specific for the mycothiol moiety. This Mycolicibacterium smegmatis (strain ATCC 700084 / mc(2)155) (Mycobacterium smegmatis) protein is Mycothiol S-conjugate amidase.